The sequence spans 395 residues: MRGQAANLVLATWISVVNFWAWNLIGPLSTSYARDMSLSSAEASLLVATPILVGALGRIVTGPLTDRFGGRAMLIAVTLASILPVLAVGVAATMGSYALLVFFGLFLGVAGTIFAVGIPFANNWYQPARRGFSTGVFGMGMVGTALSAFFTPRFVRWFGLFTTHAIVAAALASTAVVAMVVLRDAPYFRPNADPVLPRLKAAARLPVTWEMSFLYAIVFGGFVAFSNYLPTYITTIYGFSTVDAGARTAGFALAAVLARPVGGWLSDRIAPRHVVLASLAGTALLAFAAALQPPPEVWSAATFITLAVCLGVGTGGVFAWVARRAPAASVGSVTGIVAAAGGLGGYFPPLVMGATYDPVDNDYTVGLLLLVATALVACTYTALHAREPVSEEASR.

A run of 12 helical transmembrane segments spans residues 8 to 28, 45 to 65, 72 to 92, 98 to 118, 131 to 151, 157 to 177, 205 to 225, 244 to 266, 274 to 294, 301 to 321, 333 to 353, and 365 to 385; these read LVLATWISVVNFWAWNLIGPL, LLVATPILVGALGRIVTGPLT, AMLIAVTLASILPVLAVGVAA, ALLVFFGLFLGVAGTIFAVGI, GFSTGVFGMGMVGTALSAFFT, WFGLFTTHAIVAAALASTAVV, LPVTWEMSFLYAIVFGGFVAF, AGARTAGFALAAVLARPVGGWLS, VVLASLAGTALLAFAAALQPP, ATFITLAVCLGVGTGGVFAWV, VTGIVAAAGGLGGYFPPLVMG, and VGLLLLVATALVACTYTALHA.

The protein belongs to the major facilitator superfamily. Nitrate/nitrite porter (TC 2.A.1.8) family.

It localises to the cell membrane. Functionally, involved in excretion of nitrite produced by the dissimilatory reduction of nitrate. This is Probable nitrate/nitrite transporter NarK2 (narK2) from Mycobacterium tuberculosis (strain CDC 1551 / Oshkosh).